A 369-amino-acid chain; its full sequence is Delta(12)-oleate desaturase (369 aa).

The next 2 helical transmembrane spans lie at 41–61 and 69–89; these read LLSD…YFPL and IAWP…WVIA. A Histidine box-1 motif is present at residues 90-94; sequence HECGH. The chain crosses the membrane as a helical span at residues 102-122; the sequence is LIDDIVGLFFHSALLVPYFSW. The short motif at 126 to 130 is the Histidine box-2 element; that stretch reads HRRHH. The next 3 membrane-spanning stretches (helical) occupy residues 164–184, 207–227, and 234–254; these read LISL…FNMS, WIQV…LYRI, and FWVM…LVLI. A Histidine box-3 motif is present at residues 300 to 304; the sequence is HVVHH.

The protein belongs to the fatty acid desaturase type 1 family.

It is found in the membrane. It functions in the pathway lipid metabolism; polyunsaturated fatty acid biosynthesis. Its function is as follows. Delta(12)-fatty acid desaturase producing in a heterologous system linoleic acid (18:2(9Z,12Z)) and to a lower extent hexadecadienoic acid (16:2(9Z,12Z)). In Trichosanthes kirilowii (Chinese snake gourd), this protein is Delta(12)-oleate desaturase.